The following is a 3371-amino-acid chain: Protocadherin-23 (3371 aa).

Positions 1–40 are disordered; it reads MSPCGRKMGEGRQQRRAPVGKLLLLPGRRDTPHGRSGSSG. Topologically, residues 1 to 46 are cytoplasmic; that stretch reads MSPCGRKMGEGRQQRRAPVGKLLLLPGRRDTPHGRSGSSGARTQRS. Residues 47–67 traverse the membrane as a helical segment; that stretch reads LLWLLVHVWLWAASGSSAQLF. Cadherin domains lie at 65-167, 168-296, 297-413, 424-539, 540-663, 664-771, 772-881, 877-979, 980-1082, 1085-1191, 1192-1294, 1299-1415, 1404-1510, 1511-1620, 1620-1724, 1725-1829, 1830-1933, 1934-2038, 2039-2130, 2140-2242, 2243-2347, 2347-2447, 2448-2549, 2550-2665, 2666-2769, 2770-2880, and 2881-2988; these read QLFN…SPRF, PLDS…PPVF, EQDE…RPAI, ARVS…PPLF, SQQH…EPIF, WRQV…HPVF, NPST…RPKY, ERPK…HPAF, LRTS…SPSW, EHLV…SPTF, LHDV…RPFF, PGKE…IPEN, SQNI…SPSF, QDEL…NPTF, FISF…APVF, KQHL…APEF, IVSS…SPSF, PTLY…DPVL, EQNP…VIHM, SHHL…SPCF, EQSI…APAF, FLPS…PPVF, SQDF…APEF, TVKS…PPNF, SSLS…APQF, MFSS…EPIF, and TQDQ…TPLA. Over 68 to 2986 the chain is Extracellular; sequence NLTLSVDEGL…NVSFSSEGTP (2919 aa). 8 N-linked (GlcNAc...) asparagine glycosylation sites follow: asparagine 669, asparagine 772, asparagine 814, asparagine 905, asparagine 966, asparagine 1038, asparagine 1172, and asparagine 1275. N-linked (GlcNAc...) asparagine glycans are attached at residues asparagine 1487, asparagine 1595, asparagine 1617, and asparagine 1664. A glycan (N-linked (GlcNAc...) asparagine) is linked at asparagine 1898. Residues asparagine 2054, asparagine 2070, and asparagine 2098 are each glycosylated (N-linked (GlcNAc...) asparagine). Asparagine 2329 carries N-linked (GlcNAc...) asparagine glycosylation. N-linked (GlcNAc...) asparagine glycosylation is found at asparagine 2479, asparagine 2497, asparagine 2555, and asparagine 2664. N-linked (GlcNAc...) asparagine glycans are attached at residues asparagine 2929 and asparagine 2977. A helical membrane pass occupies residues 2987 to 3017; the sequence is LAVFASSFSISLVVSFLVFLILICILIVMIL. The Cytoplasmic segment spans residues 3018–3371; that stretch reads RHKQKDTINN…ELKAEDEVQI (354 aa). Basic and acidic residues predominate over residues 3117–3140; the sequence is KCSDSALSDHESRVPDSGIPRDSD. Residues 3117 to 3141 form a disordered region; the sequence is KCSDSALSDHESRVPDSGIPRDSDQ.

In terms of tissue distribution, cerebral cortex and testis.

The protein resides in the membrane. In terms of biological role, calcium-dependent cell-adhesion protein. The protein is Protocadherin-23 (DCHS2) of Homo sapiens (Human).